A 185-amino-acid polypeptide reads, in one-letter code: Ribosome-recycling factor (185 aa).

It belongs to the RRF family.

It localises to the cytoplasm. Responsible for the release of ribosomes from messenger RNA at the termination of protein biosynthesis. May increase the efficiency of translation by recycling ribosomes from one round of translation to another. The sequence is that of Ribosome-recycling factor from Streptococcus pyogenes serotype M18 (strain MGAS8232).